The following is a 215-amino-acid chain: Small ribosomal subunit protein eS1 (215 aa).

The protein belongs to the eukaryotic ribosomal protein eS1 family.

This chain is Small ribosomal subunit protein eS1, found in Halorubrum lacusprofundi (strain ATCC 49239 / DSM 5036 / JCM 8891 / ACAM 34).